Reading from the N-terminus, the 199-residue chain is Pre T-cell antigen receptor alpha (199 aa).

Positions 1–16 (MARTWLLLFLGLRCQA) are cleaved as a signal peptide. Residues 17-155 (LPSGIAGTPF…RQVLRLSVLR (139 aa)) lie on the Extracellular side of the membrane. Cys-47 and Cys-107 are disulfide-bonded. Asn-67 and Asn-117 each carry an N-linked (GlcNAc...) asparagine glycan. Positions 117–139 (NRSTHPLQLSGEEASTDRTCPQE) are disordered. Residues 156–176 (LLLFKLLLLDVFLTCSRLCVL) traverse the membrane as a helical segment. Topologically, residues 177 to 199 (AGQHLLPPPSSKQAPASTHQSWT) are cytoplasmic.

As to quaternary structure, heterodimer with TCRB; disulfide linked. This heterodimer assembles with CD3 proteins into a signaling-competent pre-T-cell receptor complex. Interacts with RHBDD1. Found in CD45+ but not in the CD45- fetal liver cells.

The protein localises to the membrane. It is found in the cell membrane. Its function is as follows. Component of the pre-T-cell receptor complex (composed of PTCRA, TCRB and the CD3 complex) that has a crucial role in early T-cell development, particularly alpha-beta T cell differentiation. This chain is Pre T-cell antigen receptor alpha, found in Rattus norvegicus (Rat).